The sequence spans 809 residues: Glycerol-3-phosphate acyltransferase (809 aa).

Residues 306 to 311 (HRSHMD) carry the HXXXXD motif motif.

This sequence belongs to the GPAT/DAPAT family.

Its subcellular location is the cell inner membrane. It carries out the reaction sn-glycerol 3-phosphate + an acyl-CoA = a 1-acyl-sn-glycero-3-phosphate + CoA. It participates in phospholipid metabolism; CDP-diacylglycerol biosynthesis; CDP-diacylglycerol from sn-glycerol 3-phosphate: step 1/3. This Vibrio vulnificus (strain YJ016) protein is Glycerol-3-phosphate acyltransferase.